A 1016-amino-acid chain; its full sequence is FHIP family protein Bm1_18400 (1016 aa).

Disordered regions lie at residues 586–608 (DSLR…RSSF) and 757–778 (SDGF…PLGK).

Belongs to the FHIP family.

In Brugia malayi (Filarial nematode worm), this protein is FHIP family protein Bm1_18400.